The following is a 719-amino-acid chain: Translation initiation factor IF-2 (719 aa).

Basic and acidic residues predominate over residues 54–67 (NKEETKPNVDEKPP). 2 disordered regions span residues 54–75 (NKEE…LTDN) and 97–122 (STKN…KRKN). Residues 109–122 (KDKKKKNKKDKRKN) show a composition bias toward basic residues. The 170-residue stretch at 221–390 (HRSPVVTVMG…LLVSEMSELK (170 aa)) folds into the tr-type G domain. Residues 230–237 (GHVDHGKT) form a G1 region. 230 to 237 (GHVDHGKT) is a binding site for GTP. Residues 255–259 (GITQH) form a G2 region. The tract at residues 276–279 (DTPG) is G3. Residues 276-280 (DTPGH) and 330-333 (NKMD) contribute to the GTP site. The segment at 330–333 (NKMD) is G4. Residues 366 to 368 (SAR) form a G5 region.

The protein belongs to the TRAFAC class translation factor GTPase superfamily. Classic translation factor GTPase family. IF-2 subfamily.

The protein resides in the cytoplasm. One of the essential components for the initiation of protein synthesis. Protects formylmethionyl-tRNA from spontaneous hydrolysis and promotes its binding to the 30S ribosomal subunits. Also involved in the hydrolysis of GTP during the formation of the 70S ribosomal complex. This chain is Translation initiation factor IF-2, found in Alkaliphilus oremlandii (strain OhILAs) (Clostridium oremlandii (strain OhILAs)).